The sequence spans 338 residues: NADPH dehydrogenase (338 aa).

22 to 25 (SPMC) is an FMN binding site. Y27 serves as a coordination point for substrate. Residues A59 and Q101 each coordinate FMN. 163 to 166 (HAAH) contacts substrate. Residues R214 and 306–307 (GR) each bind FMN.

Belongs to the NADH:flavin oxidoreductase/NADH oxidase family. NamA subfamily. Homotetramer. The cofactor is FMN.

The catalysed reaction is A + NADPH + H(+) = AH2 + NADP(+). Its function is as follows. Catalyzes the reduction of the double bond of an array of alpha,beta-unsaturated aldehydes and ketones. It also reduces the nitro group of nitroester and nitroaromatic compounds. It could have a role in detoxification processes. This chain is NADPH dehydrogenase, found in Listeria welshimeri serovar 6b (strain ATCC 35897 / DSM 20650 / CCUG 15529 / CIP 8149 / NCTC 11857 / SLCC 5334 / V8).